The sequence spans 78 residues: RNA-binding protein Hfq (78 aa).

Residues 10-69 form the Sm domain; sequence DPFLNALRKEHVPVSIYLVNGIKLQGNIESFDQYVVLLRNTVTQMVYKHAISTVVPARPV.

The protein belongs to the Hfq family. As to quaternary structure, homohexamer.

Functionally, RNA chaperone that binds small regulatory RNA (sRNAs) and mRNAs to facilitate mRNA translational regulation in response to envelope stress, environmental stress and changes in metabolite concentrations. Also binds with high specificity to tRNAs. The sequence is that of RNA-binding protein Hfq from Paraburkholderia phytofirmans (strain DSM 17436 / LMG 22146 / PsJN) (Burkholderia phytofirmans).